The chain runs to 130 residues: MASPLENLENHLEMFIENVRQIRIIVSDFQPQGQNVLNQKIQSLVTGLQEIDKLKNQVDVNVPLEVFDYIDQGRNPQLYTKDCIDKALTKNEEVKGKIDSYRKFKSNLMKELDETFPTEIAKYKAIRGDE.

This sequence belongs to the Mediator complex subunit 10 family. In terms of assembly, component of the Mediator complex.

The protein resides in the nucleus. In terms of biological role, component of the Mediator complex, a coactivator involved in the regulated transcription of nearly all RNA polymerase II-dependent genes. Mediator functions as a bridge to convey information from gene-specific regulatory proteins to the basal RNA polymerase II transcription machinery. Mediator is recruited to promoters by direct interactions with regulatory proteins and serves as a scaffold for the assembly of a functional preinitiation complex with RNA polymerase II and the general transcription factors. The protein is Mediator of RNA polymerase II transcription subunit 10 (MED10) of Aedes aegypti (Yellowfever mosquito).